Reading from the N-terminus, the 207-residue chain is Keratin-associated protein 27-1 (207 aa).

The interval 184–207 (QLLESSPGVEPTCCVTGGSQLPSK) is disordered.

Belongs to the PMG family. As to quaternary structure, interacts with hair keratins.

Its function is as follows. In the hair cortex, hair keratin intermediate filaments are embedded in an interfilamentous matrix, consisting of hair keratin-associated proteins (KRTAP), which are essential for the formation of a rigid and resistant hair shaft through their extensive disulfide bond cross-linking with abundant cysteine residues of hair keratins. The matrix proteins include the high-sulfur and high-glycine-tyrosine keratins. In Homo sapiens (Human), this protein is Keratin-associated protein 27-1 (KRTAP27-1).